The primary structure comprises 205 residues: Small ribosomal subunit protein uS4 (205 aa).

Residues tryptophan 20–lysine 44 form a disordered region. In terms of domain architecture, S4 RNA-binding spans serine 94–leucine 154.

This sequence belongs to the universal ribosomal protein uS4 family. Part of the 30S ribosomal subunit. Contacts protein S5. The interaction surface between S4 and S5 is involved in control of translational fidelity.

Functionally, one of the primary rRNA binding proteins, it binds directly to 16S rRNA where it nucleates assembly of the body of the 30S subunit. Its function is as follows. With S5 and S12 plays an important role in translational accuracy. This Bartonella bacilliformis (strain ATCC 35685 / KC583 / Herrer 020/F12,63) protein is Small ribosomal subunit protein uS4.